A 309-amino-acid polypeptide reads, in one-letter code: NADH-cytochrome b5 reductase 1 (309 aa).

A helical transmembrane segment spans residues 30-50 (FVPYAVALTAILAGLKLFTGG). Positions 60-165 (TEFQEFVLKE…RGPKGAMVYT (106 aa)) constitute an FAD-binding FR-type domain. FAD contacts are provided by residues 145–160 (TTLK…GPKG) and 171–208 (HIGM…KLDL).

Belongs to the flavoprotein pyridine nucleotide cytochrome reductase family. As to quaternary structure, monomer. Component of the 2-(3-amino-3-carboxypropyl)histidine synthase complex composed of dph1, dph2, dph3 and a NADH-dependent reductase, predominantly cbr1. FAD serves as cofactor.

The protein resides in the mitochondrion outer membrane. The enzyme catalyses 2 Fe(III)-[cytochrome b5] + NADH = 2 Fe(II)-[cytochrome b5] + NAD(+) + H(+). It catalyses the reaction 2 Fe(3+)-[Dph3] + NADH = 2 Fe(2+)-[Dph3] + NAD(+) + H(+). Its pathway is protein modification; peptidyl-diphthamide biosynthesis. Functionally, NADH-dependent reductase for dph3 and cytochrome b5. Required for the first step of diphthamide biosynthesis, a post-translational modification of histidine which occurs in elongation factor 2. Dph1 and dph2 transfer a 3-amino-3-carboxypropyl (ACP) group from S-adenosyl-L-methionine (SAM) to a histidine residue, the reaction is assisted by a reduction system comprising dph3 and a NADH-dependent reductase, predominantly cbr1. By reducing dph3, also involved in the formation of the tRNA wobble base modification mcm5s 2U (5-methoxycarbonylmethyl-2-thiouridine), mediated by the elongator complex. The cytochrome b5/NADH cytochrome b5 reductase electron transfer system supports the catalytic activity of several sterol biosynthetic enzymes. This Neosartorya fischeri (strain ATCC 1020 / DSM 3700 / CBS 544.65 / FGSC A1164 / JCM 1740 / NRRL 181 / WB 181) (Aspergillus fischerianus) protein is NADH-cytochrome b5 reductase 1 (cbr1).